Reading from the N-terminus, the 400-residue chain is MMGKSGSQQLLMDEKIYVAVGSDLGNKSTLVWAIQNTGGKEFCIVHVHQPLYRKEKEKTQKILDKYLQKCRQMQVCAEMIHIKMESVEKGIIQLISERNVKKLVMGAASDTRYSMRMADLLSTKAIYIRQEAPATCCIWFTCKGYLVYKRESIMGNTSLEYASTSSGQDSVRSRGSVIPSRQFTISRGNGNVYQLAVFEAEKSKKEASLEAFKHQEVVKEKNEAIKRGKEWESAYLEELKQRKETEMELKKVREKLEKMRYISENRITESYMLVQKLQDKYNLATKVLRKAKEERDLLIKGRDIAIIEVEELRKEVSRSDEHREAPQYFICPISLEVMKDPQLAADGFTYEAEAISTWLQGGHETSPMTNTKLHHTKLVPNLALRSAIQEWLHASSSFRK.

The stretch at 229–298 (KEWESAYLEE…RKAKEERDLL (70 aa)) forms a coiled coil. The region spanning 324-398 (EAPQYFICPI…QEWLHASSSF (75 aa)) is the U-box domain.

It catalyses the reaction S-ubiquitinyl-[E2 ubiquitin-conjugating enzyme]-L-cysteine + [acceptor protein]-L-lysine = [E2 ubiquitin-conjugating enzyme]-L-cysteine + N(6)-ubiquitinyl-[acceptor protein]-L-lysine.. Its pathway is protein modification; protein ubiquitination. In terms of biological role, functions as an E3 ubiquitin ligase. The polypeptide is U-box domain-containing protein 37 (PUB37) (Arabidopsis thaliana (Mouse-ear cress)).